The sequence spans 348 residues: D-erythrose-4-phosphate dehydrogenase (348 aa).

Residues 12–13 (RI) and Arg-81 each bind NAD(+). Residues 154-156 (SCT), Arg-200, 213-214 (TK), and Arg-236 each bind substrate. Cys-155 (nucleophile) is an active-site residue. Asn-318 contributes to the NAD(+) binding site.

This sequence belongs to the glyceraldehyde-3-phosphate dehydrogenase family. Epd subfamily. In terms of assembly, homotetramer.

It is found in the cytoplasm. The catalysed reaction is D-erythrose 4-phosphate + NAD(+) + H2O = 4-phospho-D-erythronate + NADH + 2 H(+). It participates in cofactor biosynthesis; pyridoxine 5'-phosphate biosynthesis; pyridoxine 5'-phosphate from D-erythrose 4-phosphate: step 1/5. Functionally, catalyzes the NAD-dependent conversion of D-erythrose 4-phosphate to 4-phosphoerythronate. This is D-erythrose-4-phosphate dehydrogenase from Salmonella paratyphi B (strain ATCC BAA-1250 / SPB7).